A 103-amino-acid polypeptide reads, in one-letter code: Large ribosomal subunit protein bL21 (103 aa).

The protein belongs to the bacterial ribosomal protein bL21 family. As to quaternary structure, part of the 50S ribosomal subunit. Contacts protein L20.

Functionally, this protein binds to 23S rRNA in the presence of protein L20. The protein is Large ribosomal subunit protein bL21 of Glaesserella parasuis serovar 5 (strain SH0165) (Haemophilus parasuis).